Reading from the N-terminus, the 169-residue chain is Putative outer membrane protein BBA03 (169 aa).

The protein resides in the cell outer membrane. This chain is Putative outer membrane protein BBA03, found in Borreliella burgdorferi (strain ATCC 35210 / DSM 4680 / CIP 102532 / B31) (Borrelia burgdorferi).